The following is a 430-amino-acid chain: Tol-Pal system protein TolB (430 aa).

Positions 1-21 (MKQALRVAFGFLMLWAAMLHA) are cleaved as a signal peptide.

This sequence belongs to the TolB family. The Tol-Pal system is composed of five core proteins: the inner membrane proteins TolA, TolQ and TolR, the periplasmic protein TolB and the outer membrane protein Pal. They form a network linking the inner and outer membranes and the peptidoglycan layer.

The protein localises to the periplasm. Its function is as follows. Part of the Tol-Pal system, which plays a role in outer membrane invagination during cell division and is important for maintaining outer membrane integrity. TolB occupies a key intermediary position in the Tol-Pal system because it communicates directly with both membrane-embedded components, Pal in the outer membrane and TolA in the inner membrane. The polypeptide is Tol-Pal system protein TolB (Escherichia fergusonii (strain ATCC 35469 / DSM 13698 / CCUG 18766 / IAM 14443 / JCM 21226 / LMG 7866 / NBRC 102419 / NCTC 12128 / CDC 0568-73)).